Here is a 451-residue protein sequence, read N- to C-terminus: 2-succinylbenzoate--CoA ligase (451 aa).

Belongs to the ATP-dependent AMP-binding enzyme family. MenE subfamily.

The catalysed reaction is 2-succinylbenzoate + ATP + CoA = 2-succinylbenzoyl-CoA + AMP + diphosphate. It participates in quinol/quinone metabolism; 1,4-dihydroxy-2-naphthoate biosynthesis; 1,4-dihydroxy-2-naphthoate from chorismate: step 5/7. It functions in the pathway quinol/quinone metabolism; menaquinone biosynthesis. Its function is as follows. Converts 2-succinylbenzoate (OSB) to 2-succinylbenzoyl-CoA (OSB-CoA). This chain is 2-succinylbenzoate--CoA ligase, found in Lactococcus lactis subsp. lactis (strain IL1403) (Streptococcus lactis).